Reading from the N-terminus, the 628-residue chain is Probable potassium transport system protein Kup (628 aa).

The next 11 helical transmembrane spans lie at Ile56–Ile76, Leu109–Ile129, Ala141–Phe161, Phe174–Ile194, Ala209–Leu229, Trp253–Leu273, Leu295–Phe315, Ile343–Phe363, Ala372–Ile392, Trp400–Ala420, and Ile425–Thr445.

Belongs to the HAK/KUP transporter (TC 2.A.72) family.

It is found in the cell inner membrane. The catalysed reaction is K(+)(in) + H(+)(in) = K(+)(out) + H(+)(out). Transport of potassium into the cell. Likely operates as a K(+):H(+) symporter. The polypeptide is Probable potassium transport system protein Kup (Methylibium petroleiphilum (strain ATCC BAA-1232 / LMG 22953 / PM1)).